The following is a 153-amino-acid chain: Histone H2B.10 (153 aa).

Composition is skewed to basic and acidic residues over residues 1–28 (MAPKAEKKPAAKKPAEEEPAAEKAEKAL) and 36–53 (EKRLPAGKAEKSSGEGKK). A disordered region spans residues 1–61 (MAPKAEKKPA…KKAGRKKAKK (61 aa)). An N6-acetyllysine mark is found at lysine 7 and lysine 37. A Glycyl lysine isopeptide (Lys-Gly) (interchain with G-Cter in ubiquitin) cross-link involves residue lysine 149.

Belongs to the histone H2B family. As to quaternary structure, the nucleosome is a histone octamer containing two molecules each of H2A, H2B, H3 and H4 assembled in one H3-H4 heterotetramer and two H2A-H2B heterodimers. The octamer wraps approximately 147 bp of DNA. Post-translationally, can be acetylated to form H2BK6ac and H2BK33ac. Monoubiquitinated by BRE1 to form H2BK143ub1 and deubiquitinated by UBP26. Required for heterochromatic histone H3 di- and trimethylation at H3K4me. May give a specific tag for epigenetic transcriptional activation.

It localises to the nucleus. The protein resides in the chromosome. Core component of nucleosome. Nucleosomes wrap and compact DNA into chromatin, limiting DNA accessibility to the cellular machineries which require DNA as a template. Histones thereby play a central role in transcription regulation, DNA repair, DNA replication and chromosomal stability. DNA accessibility is regulated via a complex set of post-translational modifications of histones, also called histone code, and nucleosome remodeling. This chain is Histone H2B.10 (H2B.10), found in Oryza sativa subsp. japonica (Rice).